The sequence spans 366 residues: UDP-N-acetylglucosamine--N-acetylmuramyl-(pentapeptide) pyrophosphoryl-undecaprenol N-acetylglucosamine transferase (366 aa).

UDP-N-acetyl-alpha-D-glucosamine-binding positions include 10-12 (TGG), Asn-124, Ser-195, and Gln-295.

It belongs to the glycosyltransferase 28 family. MurG subfamily.

It localises to the cell membrane. It catalyses the reaction di-trans,octa-cis-undecaprenyl diphospho-N-acetyl-alpha-D-muramoyl-L-alanyl-D-glutamyl-meso-2,6-diaminopimeloyl-D-alanyl-D-alanine + UDP-N-acetyl-alpha-D-glucosamine = di-trans,octa-cis-undecaprenyl diphospho-[N-acetyl-alpha-D-glucosaminyl-(1-&gt;4)]-N-acetyl-alpha-D-muramoyl-L-alanyl-D-glutamyl-meso-2,6-diaminopimeloyl-D-alanyl-D-alanine + UDP + H(+). It participates in cell wall biogenesis; peptidoglycan biosynthesis. Its function is as follows. Cell wall formation. Catalyzes the transfer of a GlcNAc subunit on undecaprenyl-pyrophosphoryl-MurNAc-pentapeptide (lipid intermediate I) to form undecaprenyl-pyrophosphoryl-MurNAc-(pentapeptide)GlcNAc (lipid intermediate II). The chain is UDP-N-acetylglucosamine--N-acetylmuramyl-(pentapeptide) pyrophosphoryl-undecaprenol N-acetylglucosamine transferase from Bacillus licheniformis (strain ATCC 14580 / DSM 13 / JCM 2505 / CCUG 7422 / NBRC 12200 / NCIMB 9375 / NCTC 10341 / NRRL NRS-1264 / Gibson 46).